Reading from the N-terminus, the 373-residue chain is NAD-dependent protein deacetylase SIR2rp1 (373 aa).

The Deacetylase sirtuin-type domain maps to 12–349 (HALGEPTVEG…LKLAECLGLR (338 aa)). NAD(+) contacts are provided by residues 39–59 (GAGASVAAGIPDFRSSDTGIY) and 124–127 (QNID). The Proton acceptor role is filled by His-144. Residues Cys-152, Cys-155, Cys-176, and Cys-179 each contribute to the Zn(2+) site. NAD(+) contacts are provided by residues 216-218 (GTS) and 241-243 (NRE). The interval 263–313 (DAVAKEGRSSSSQSRSPSASARREEGGTEDGSSSPNEEVEDASTSSSSDGY) is disordered. Low complexity predominate over residues 271 to 282 (SSSSQSRSPSAS). Cys-335 serves as a coordination point for NAD(+).

Belongs to the sirtuin family. Class I subfamily. It depends on Zn(2+) as a cofactor.

It is found in the nucleus. It catalyses the reaction N(6)-acetyl-L-lysyl-[protein] + NAD(+) + H2O = 2''-O-acetyl-ADP-D-ribose + nicotinamide + L-lysyl-[protein]. Its function is as follows. NAD-dependent deacetylase, which probably acts as a regulator of gene expression believed to help form modified chromatin structures on the genes it regulates. In Leishmania major, this protein is NAD-dependent protein deacetylase SIR2rp1 (SIR2rp1).